We begin with the raw amino-acid sequence, 153 residues long: UPF0251 protein Daud_0090 (153 aa).

Over residues 129-138 (ELMTRPERCS) the composition is skewed to basic and acidic residues. Residues 129–153 (ELMTRPERCSRPKRGAGKYRVPKKR) are disordered. Residues 139 to 153 (RPKRGAGKYRVPKKR) are compositionally biased toward basic residues.

Belongs to the UPF0251 family.

This chain is UPF0251 protein Daud_0090, found in Desulforudis audaxviator (strain MP104C).